We begin with the raw amino-acid sequence, 223 residues long: UPF0441 protein YgiB (223 aa).

Residues 178-195 (TVPKTAMAPKPATTTTVT) are compositionally biased toward low complexity. Residues 178–223 (TVPKTAMAPKPATTTTVTRGGFGESVAKQSTMQRSATGTSSRSMGG) are disordered. The segment covering 204 to 223 (AKQSTMQRSATGTSSRSMGG) has biased composition (polar residues).

Belongs to the UPF0441 family.

This chain is UPF0441 protein YgiB, found in Shigella flexneri serotype 5b (strain 8401).